An 85-amino-acid polypeptide reads, in one-letter code: U4-theraphotoxin-Hhn1d (85 aa).

Residues M1–A22 form the signal peptide. A propeptide spanning residues E23 to R48 is cleaved from the precursor. 3 disulfides stabilise this stretch: C52-C66, C56-C77, and C71-C82.

The protein belongs to the neurotoxin 12 (Hwtx-2) family. 02 (Hwtx-2) subfamily. As to expression, expressed by the venom gland.

The protein resides in the secreted. Postsynaptic neurotoxin. This chain is U4-theraphotoxin-Hhn1d, found in Cyriopagopus hainanus (Chinese bird spider).